A 1674-amino-acid chain; its full sequence is Kinesin-like protein KIF21A (1674 aa).

Methionine 1 is subject to N-acetylmethionine. Positions 9–371 (SVRVAVRIRP…LKYANRARNI (363 aa)) constitute a Kinesin motor domain. 88–95 (GQTGAGKT) serves as a coordination point for ATP. Residues 365 to 575 (ANRARNIKNK…NREERSVAGK (211 aa)) adopt a coiled-coil conformation. Serine 524 is subject to Phosphoserine. Disordered regions lie at residues 556–641 (KKRL…DEKA), 779–804 (EEQE…DQRK), and 841–881 (SDKV…AQQK). Over residues 560–597 (QKLEESNREERSVAGKEDNTDTDQEKKEEKGVSERENN) the composition is skewed to basic and acidic residues. The span at 598–637 (ELEVEESQEVSDHEDEEEEEEEEEDDIDGGESSDESDSES) shows a compositional bias: acidic residues. Residues 851–865 (KLSSSDAPAQDTGSS) are compositionally biased toward polar residues. 2 coiled-coil regions span residues 931–1019 (TDII…AKEE) and 1053–1083 (LQAA…NQLL). Residues 1116-1138 (VEDSTDEDAPLNSPGSEGSTLSS) form a disordered region. Residues 1128–1138 (SPGSEGSTLSS) show a composition bias toward polar residues. Positions 1146–1167 (EVKPKNKARRRTTTQMELLYAD) are interaction with KANK1 and KANK2. 2 stretches are compositionally biased toward polar residues: residues 1170–1179 (ELASDTSTGD) and 1196–1205 (GMNTETSGTS). Residues 1170 to 1318 (ELASDTSTGD…SSLSEVHRSS (149 aa)) are disordered. Phosphoserine is present on residues serine 1212, serine 1225, serine 1229, and serine 1239. Residues 1245–1262 (KAYEKAEKSKAKEQKHSD) are compositionally biased toward basic and acidic residues. The segment covering 1288 to 1297 (NRLTVSQGNT) has biased composition (polar residues). 7 WD repeats span residues 1345 to 1382 (GHTK…EIMS), 1385 to 1423 (GHPN…KCIR), 1449 to 1487 (SGEN…STGK), 1490 to 1532 (GHLG…LGTV), 1541 to 1578 (PHYD…LLQQ), 1582 to 1621 (AHKD…PVGE), and 1624 to 1661 (GHDS…DGQI). Serine 1662 carries the phosphoserine modification. Phosphothreonine is present on threonine 1664. Serine 1673 bears the Phosphoserine mark.

This sequence belongs to the TRAFAC class myosin-kinesin ATPase superfamily. Kinesin family. Part of a cortical microtubule stabilization complex (CMSC) composed of KANK1, PPFIA1, PPFIBP1, ERC1/ELKS, PHLDB2/LL5beta, CLASPs, KIF21A and possibly additional interactors; within CMSCs KANK1 and PHLDB2/LL5beta seem to be the core components for recruiting microtubule-binding proteins KIF21A and CLASPs, whereas PPFIA1, PPFIBP1 and ERC1/ELKS serve as scaffolds for protein clustering. Interacts (via residues 1146-1167) with KANK1 (via ankyrin repeats 1-5) and KANK2 (via ankyrin repeats 1-5).

It is found in the cytoplasm. The protein localises to the cytoskeleton. The protein resides in the cell cortex. It localises to the cell projection. Its subcellular location is the axon. It is found in the dendrite. The protein localises to the growth cone. In terms of biological role, processive microtubule plus-end directed motor protein involved in neuronal axon guidance. Is recruited by KANK1 to cortical microtubule stabilizing complexes (CMSCs) at focal adhesions (FAs) rims where it promotes microtubule capture and stability. Controls microtubule polymerization rate at axonal growth cones and suppresses microtubule growth without inducing microtubule disassembly once it reaches the cell cortex. In Homo sapiens (Human), this protein is Kinesin-like protein KIF21A (KIF21A).